A 164-amino-acid chain; its full sequence is Magnesium-dependent phosphatase 1 (164 aa).

Residue Asp-11 is the Nucleophile of the active site. Asp-11 is a Mg(2+) binding site. Phosphate is bound by residues Leu-12 and Asp-13. Asp-13 is a binding site for Mg(2+). Asp-13 acts as the Proton donor in catalysis. Trp-20 provides a ligand contact to substrate. Phosphate is bound by residues Ser-69, Arg-70, and Lys-100. Arg-70 contributes to the substrate binding site. Asp-123 contributes to the Mg(2+) binding site.

It belongs to the HAD-like hydrolase superfamily. Mg(2+) serves as cofactor.

The catalysed reaction is O-phospho-L-tyrosyl-[protein] + H2O = L-tyrosyl-[protein] + phosphate. Its activity is regulated as follows. Inhibited by vanadate and zinc, and slightly by calcium. Magnesium-dependent phosphatase which may act as a tyrosine phosphatase. The chain is Magnesium-dependent phosphatase 1 (Mdp1) from Mus musculus (Mouse).